The sequence spans 417 residues: Tyrosine--tRNA ligase (417 aa).

Tyr39 lines the L-tyrosine pocket. The 'HIGH' region signature appears at 44–53; sequence PTASSLHAGS. 2 residues coordinate L-tyrosine: Tyr176 and Gln180. Residues 236–240 carry the 'KMSKS' region motif; it reads KMGKS. Lys239 is an ATP binding site. In terms of domain architecture, S4 RNA-binding spans 350–417; sequence TGLLILLVQA…KKKHVLIKPL (68 aa).

It belongs to the class-I aminoacyl-tRNA synthetase family. TyrS type 1 subfamily. As to quaternary structure, homodimer.

The protein localises to the cytoplasm. It carries out the reaction tRNA(Tyr) + L-tyrosine + ATP = L-tyrosyl-tRNA(Tyr) + AMP + diphosphate + H(+). In terms of biological role, catalyzes the attachment of tyrosine to tRNA(Tyr) in a two-step reaction: tyrosine is first activated by ATP to form Tyr-AMP and then transferred to the acceptor end of tRNA(Tyr). This is Tyrosine--tRNA ligase from Bartonella henselae (strain ATCC 49882 / DSM 28221 / CCUG 30454 / Houston 1) (Rochalimaea henselae).